The primary structure comprises 432 residues: Tol-Pal system protein TolB (432 aa).

A signal peptide spans 1–21 (MKHVRIFATLLALLVISVTPA).

Belongs to the TolB family. As to quaternary structure, the Tol-Pal system is composed of five core proteins: the inner membrane proteins TolA, TolQ and TolR, the periplasmic protein TolB and the outer membrane protein Pal. They form a network linking the inner and outer membranes and the peptidoglycan layer.

Its subcellular location is the periplasm. Its function is as follows. Part of the Tol-Pal system, which plays a role in outer membrane invagination during cell division and is important for maintaining outer membrane integrity. The chain is Tol-Pal system protein TolB from Geobacter sulfurreducens (strain ATCC 51573 / DSM 12127 / PCA).